The sequence spans 250 residues: 26S proteasome non-ATPase regulatory subunit 8 (250 aa).

Residues 63-233 (HDFETFDDYI…QEKPVNLDTV (171 aa)) enclose the PCI domain.

It belongs to the proteasome subunit S14 family.

Acts as a regulatory subunit of the 26S proteasome which is involved in the ATP-dependent degradation of ubiquitinated proteins. This Caenorhabditis elegans protein is 26S proteasome non-ATPase regulatory subunit 8.